A 522-amino-acid chain; its full sequence is Maturase K (522 aa).

Belongs to the intron maturase 2 family. MatK subfamily.

The protein localises to the plastid. The protein resides in the chloroplast. Its function is as follows. Usually encoded in the trnK tRNA gene intron. Probably assists in splicing its own and other chloroplast group II introns. In Tigridia pavonia (Mexican shell flower), this protein is Maturase K.